The chain runs to 109 residues: MSHSTDHSGASHGSVKTYMTGFILSIILTVIPFWMVMTGAASPAVILGTILAMAVVQVLVHLVCFLHMNTKSDEGWNMTAFVFTVLIIAILVVGSIWIMWNLNYNMMMH.

Over 1–17 the chain is Cytoplasmic; that stretch reads MSHSTDHSGASHGSVKT. Residues 18 to 36 form a helical membrane-spanning segment; the sequence is YMTGFILSIILTVIPFWMV. Topologically, residues 37–45 are periplasmic; the sequence is MTGAASPAV. Residues 46-64 traverse the membrane as a helical segment; it reads ILGTILAMAVVQVLVHLVC. The Cytoplasmic portion of the chain corresponds to 65–80; sequence FLHMNTKSDEGWNMTA. A helical transmembrane segment spans residues 81-99; the sequence is FVFTVLIIAILVVGSIWIM. The Periplasmic portion of the chain corresponds to 100 to 109; the sequence is WNLNYNMMMH.

It belongs to the cytochrome c oxidase bacterial subunit 4 family. In terms of assembly, heterooctamer of two A chains, two B chains, two C chains and two D chains.

It is found in the cell inner membrane. In terms of biological role, cytochrome bo(3) ubiquinol terminal oxidase is the component of the aerobic respiratory chain of E.coli that predominates when cells are grown at high aeration. Has proton pump activity across the membrane in addition to electron transfer, pumping 2 protons/electron. The chain is Cytochrome bo(3) ubiquinol oxidase subunit 4 (cyoD) from Escherichia coli O157:H7.